The primary structure comprises 258 residues: Imidazole glycerol phosphate synthase subunit HisF (258 aa).

Residues Asp11 and Asp130 contribute to the active site.

The protein belongs to the HisA/HisF family. As to quaternary structure, heterodimer of HisH and HisF.

The protein localises to the cytoplasm. It carries out the reaction 5-[(5-phospho-1-deoxy-D-ribulos-1-ylimino)methylamino]-1-(5-phospho-beta-D-ribosyl)imidazole-4-carboxamide + L-glutamine = D-erythro-1-(imidazol-4-yl)glycerol 3-phosphate + 5-amino-1-(5-phospho-beta-D-ribosyl)imidazole-4-carboxamide + L-glutamate + H(+). The protein operates within amino-acid biosynthesis; L-histidine biosynthesis; L-histidine from 5-phospho-alpha-D-ribose 1-diphosphate: step 5/9. Its function is as follows. IGPS catalyzes the conversion of PRFAR and glutamine to IGP, AICAR and glutamate. The HisF subunit catalyzes the cyclization activity that produces IGP and AICAR from PRFAR using the ammonia provided by the HisH subunit. This chain is Imidazole glycerol phosphate synthase subunit HisF, found in Pectobacterium carotovorum subsp. carotovorum (strain PC1).